Here is a 103-residue protein sequence, read N- to C-terminus: Small ribosomal subunit protein uS10 (103 aa).

It belongs to the universal ribosomal protein uS10 family. Part of the 30S ribosomal subunit.

Involved in the binding of tRNA to the ribosomes. The protein is Small ribosomal subunit protein uS10 of Xylella fastidiosa (strain 9a5c).